A 517-amino-acid chain; its full sequence is T-complex protein 11-like protein 2 (517 aa).

Residues 1–59 (MPFNGEKQCVSEDQQSDSESSRFAEGVASLSDYECSRQSFTSDSSSKSSSPASTSPPRG) form a disordered region. Ser16 carries the phosphoserine modification. Residues 36–55 (SRQSFTSDSSSKSSSPASTS) are compositionally biased toward low complexity.

The protein belongs to the TCP11 family. As to quaternary structure, interacts with FMNL2; this interaction promotes muscle-derived satellite cell (MDSC) migration and differentiation.

The protein localises to the cytoplasm. It is found in the cytoskeleton. In terms of biological role, promotes the migration of muscle-derived satellite cells (MDSCs) during differentiation throught interaction with FMNL2 and therefore may participate in microfilament assembly. This is T-complex protein 11-like protein 2 from Mus musculus (Mouse).